Consider the following 659-residue polypeptide: ATP-binding cassette sub-family D member 3 (659 aa).

Residues 2–61 are interaction with PEX19; the sequence is AAFSKYLTARNSSLAGAAFLLFCLLHKRRRALGLHGKKSGKPPLQNNEKEGKKERAVVDK. N12 carries N-linked (GlcNAc...) asparagine glycosylation. At K61 the chain carries N6-acetyllysine. Residues 84-104 traverse the membrane as a helical segment; it reads GYLILIAVMLVSRTYCDVWMI. Residues 85–372 form the ABC transmembrane type-1 domain; that stretch reads YLILIAVMLV…MLLRMSQALG (288 aa). N106 carries an N-linked (GlcNAc...) asparagine glycan. The helical transmembrane segment at 126 to 146 threads the bilayer; it reads LFNFIAAMPLISLVNNFLKYG. N206 carries N-linked (GlcNAc...) asparagine glycosylation. A helical transmembrane segment spans residues 224 to 244; it reads AIGAQGPASMMAYLLVSGLFL. At K260 the chain carries N6-acetyllysine. The helical transmembrane segment at 313–333 threads the bilayer; it reads MGFIDSIIAKYIATVVGYLVV. Position 399 is an N6-acetyllysine (K399). Residue S424 is modified to Phosphoserine. Residues 434–659 form the ABC transporter domain; that stretch reads INADNIIKFD…ITEDTVEFGS (226 aa). 473 to 480 serves as a coordination point for ATP; sequence GPNGCGKS. Residue K533 is modified to N6-acetyllysine. Position 659 is a phosphoserine (S659).

This sequence belongs to the ABC transporter superfamily. ABCD family. Peroxisomal fatty acyl CoA transporter (TC 3.A.1.203) subfamily. In terms of assembly, homodimers. Can form heterodimers with ABCD1 and ABCD2. Dimerization is necessary to form an active transporter. Interacts with PEX19; mediates the targeting of ABCD3 to peroxisomes. Ubiquitinated by PEX2 during pexophagy in response to starvation, leading to its degradation.

The protein resides in the peroxisome membrane. The catalysed reaction is a very long-chain fatty acyl-CoA + H2O = a very long-chain fatty acid + CoA + H(+). It catalyses the reaction a very long-chain fatty acid(in) + ATP + H2O = a very long-chain fatty acid(out) + ADP + phosphate + H(+). The enzyme catalyses a long-chain fatty acyl-CoA + H2O = a long-chain fatty acid + CoA + H(+). It carries out the reaction a long-chain fatty acid(in) + ATP + H2O = a long-chain fatty acid(out) + ADP + phosphate + H(+). The catalysed reaction is pristanoyl-CoA + H2O = 2,6,10,14-tetramethylpentadecanoate + CoA + H(+). It catalyses the reaction 2,6,10,14-tetramethylpentadecanoate(in) + ATP + H2O = 2,6,10,14-tetramethylpentadecanoate(out) + ADP + phosphate + H(+). The enzyme catalyses hexadecanedioyl-CoA + H2O = hexadecanedioate + CoA + H(+). It carries out the reaction hexadecanedioate(in) + ATP + H2O = hexadecanedioate(out) + ADP + phosphate + H(+). The catalysed reaction is (5Z,8Z,11Z,14Z,17Z)-eicosapentaenoyl-CoA + H2O = (5Z,8Z,11Z,14Z,17Z)-eicosapentaenoate + CoA + H(+). It catalyses the reaction (5Z,8Z,11Z,14Z,17Z)-eicosapentaenoate(in) + ATP + H2O = (5Z,8Z,11Z,14Z,17Z)-eicosapentaenoate(out) + ADP + phosphate + H(+). The enzyme catalyses (4Z,7Z,10Z,13Z,16Z,19Z)-docosahexaenoyl-CoA + H2O = (4Z,7Z,10Z,13Z,16Z,19Z)-docosahexaenoate + CoA + H(+). It carries out the reaction (4Z,7Z,10Z,13Z,16Z,19Z)-docosahexaenoate(in) + ATP + H2O = (4Z,7Z,10Z,13Z,16Z,19Z)-docosahexaenoate(out) + ADP + phosphate + H(+). Broad substrate specificity ATP-dependent transporter of the ATP-binding cassette (ABC) family that catalyzes the transport of long-chain fatty acids (LCFA)-CoA, dicarboxylic acids-CoA, long-branched-chain fatty acids-CoA and bile acids from the cytosol to the peroxisome lumen for beta-oxydation. Has fatty acyl-CoA thioesterase and ATPase activities. Probably hydrolyzes fatty acyl-CoAs into free fatty acids prior to their ATP-dependent transport into peroxisomes. Thus, play a role in regulation of LCFAs and energy metabolism namely, in the degradation and biosynthesis of fatty acids by beta-oxidation. This Rattus norvegicus (Rat) protein is ATP-binding cassette sub-family D member 3 (Abcd3).